Consider the following 151-residue polypeptide: Probable ribonuclease P/MRP protein subunit POP5 (151 aa).

Belongs to the eukaryotic/archaeal RNase P protein component 2 family. As to quaternary structure, component of nuclear RNase P and RNase MRP ribonucleoproteins. Interacts with GAF1/RPP30.

It is found in the nucleus. It localises to the nucleolus. Essential protein required during embryogenesis. Component of ribonuclease P, a protein complex that generates mature tRNA molecules by cleaving their 5'-ends. Also a component of RNase MRP. The chain is Probable ribonuclease P/MRP protein subunit POP5 (EMB1687) from Arabidopsis thaliana (Mouse-ear cress).